The primary structure comprises 357 residues: H-2 class I histocompatibility antigen, D-37 alpha chain (357 aa).

An N-terminal signal peptide occupies residues 1-20; the sequence is MLLFAHLLQLLVSATVPTQS. The interval 21 to 110 is alpha-1; sequence SPHSLRYFTT…LLGYYNQSND (90 aa). At 21 to 304 the chain is on the extracellular side; that stretch reads SPHSLRYFTT…EPPPSTVSNM (284 aa). N-linked (GlcNAc...) asparagine glycosylation occurs at N106. Residues 111-202 form an alpha-2 region; sequence ESHTLQWMYG…RLGNETLQRS (92 aa). C121 and C184 are joined by a disulfide. N-linked (GlcNAc...) asparagine glycosylation occurs at N196. Positions 203-294 are alpha-3; the sequence is DPPKAHVTHH…GLPEPLTLRW (92 aa). An Ig-like C1-type domain is found at 205 to 293; that stretch reads PKAHVTHHPR…EGLPEPLTLR (89 aa). C223 and C279 form a disulfide bridge. A connecting peptide region spans residues 295-304; sequence EPPPSTVSNM. The chain crosses the membrane as a helical span at residues 305-327; the sequence is VIIAVLVVLGAVIILGAVVAFVM. Residues 328 to 357 lie on the Cytoplasmic side of the membrane; it reads KRRRHIGVKGCYAHVLGSKSFQTSDWPQKA. S347 carries the phosphoserine modification.

It belongs to the MHC class I family. As to quaternary structure, heterodimer of an alpha chain and a beta chain (beta-2-microglobulin).

It localises to the membrane. Involved in the presentation of foreign antigens to the immune system. This Mus musculus (Mouse) protein is H-2 class I histocompatibility antigen, D-37 alpha chain (H2-T23).